The chain runs to 1249 residues: Apoptotic protease-activating factor 1 (1249 aa).

Residues 1-90 (MDAKARNCLL…KDLAALLQSG (90 aa)) form the CARD domain. Residues 106–415 (ITSFVRTVLC…LETEEVEDIL (310 aa)) form the NB-ARC domain. ATP is bound by residues 154-161 (GMAGCGKS) and R265. The WD 1-1 repeat unit spans residues 613-652 (PHTDAVYHACFSQDGQRIASCGADKTLQVFKAETGEKLLD). A WD 1-2 repeat occupies 655–694 (AHEDEVLCCAFSSDDSYIATCSADKKVKIWDSATGKLVHT). The stretch at 697 to 738 (EHSEQVNCCHFTNKSNHLLLATGSNDFFLKLWDLNQKECRNT) is one WD 1-3 repeat. The WD 1-4 repeat unit spans residues 741-780 (GHTNSVNHCRFSPDDELLASCSADGTLRLWDVRSANERKS). The WD 1-5 repeat unit spans residues 796 to 837 (DVEVIVKCCSWSADGDKIIVAAKNKVLLFDIHTSGLLAEIHT). Residues 838–877 (GHHSTIQYCDFSPYDHLAVIALSQYCVELWNIDSRLKVAD) form a WD 1-6 repeat. The WD 1-7 repeat unit spans residues 880 to 910 (GHLSWVHGVMFSPDGSSFLTASDDQTIRVWE). Positions 910 to 921 (ETKKVCKNSAIV) are interpropeller linker. Residues 922 to 958 (LKQEIDVVFQENETMVLAVDNIRGLQLIAGKTGQIDY) form a WD 2-1 repeat. One copy of the WD 2-2 repeat lies at 959 to 998 (LPEAQVSCCCLSPHLEYVAFGDEDGAIKIIELPNNRVFSS). A WD 2-3 repeat occupies 1001 to 1040 (GHKKAVRHIQFTADGKTLISSSEDSVIQVWNWQTGDYVFL). One copy of the WD 2-4 repeat lies at 1042 to 1080 (AHQETVKDFRLLQDSRLLSWSFDGTVKVWNVITGRIERD). One copy of the WD 2-5 repeat lies at 1083–1122 (CHQGTVLSCAISSDATKFSSTSADKTAKIWSFDLLSPLHE). Residues 1125–1164 (GHNGCVRCSAFSLDGILLATGDDNGEIRIWNVSDGQLLHS) form a WD 2-6 repeat. A WD 2-7 repeat occupies 1176-1213 (THGGWVTDVCFSPDSKTLVSAGGYLKWWNVATGDSSQT). One copy of the WD 2-8 repeat lies at 1214 to 1249 (FYTNGTNLKKIHVSPDFRTYVTVDNLGILYILQVLE).

Monomer. Oligomerizes to a heptameric ring, known as the apoptosome, upon binding of cytochrome c and dATP. Oligomeric Apaf-1 and pro-caspase-9 bind to each other via their respective NH2-terminal CARD domains and consecutively mature caspase-9 is released from the complex. Interacts with UACA. It may also interact with Bcl-XL. Interacts with APIP. Interacts (via CARD and NACHT domains) with NAIP/BIRC1 (via NACHT domain). Interacts with CIAO2A. As to expression, highly expressed in lung and spleen, weakly in brain and kidney and not detectable in liver.

The protein resides in the cytoplasm. Functionally, oligomeric Apaf-1 mediates the cytochrome c-dependent autocatalytic activation of pro-caspase-9 (Apaf-3), leading to the activation of caspase-3 and apoptosis. This activation requires ATP. This is Apoptotic protease-activating factor 1 (Apaf1) from Mus musculus (Mouse).